Consider the following 1073-residue polypeptide: Activated Cdc42 kinase Ack (1073 aa).

The segment at 88 to 110 is disordered; the sequence is IGGGKQPSSKKQSSAARESSQGN. Residues 123 to 383 enclose the Protein kinase domain; the sequence is ITMGLKLGDG…PTFAALKEYL (261 aa). ATP is bound by residues 129 to 137 and K156; that span reads LGDGSFGVV. Catalysis depends on D250, which acts as the Proton acceptor. The region spanning 386–446 is the SH3 domain; it reads MSPPVMRASR…PRNLLEQRKV (61 aa). Disordered stretches follow at residues 484-506, 803-834, and 862-882; these read QRKC…SSKQ, PLKN…VEAA, and AQPP…HQQQ. A compositionally biased stretch (low complexity) spans 812-826; the sequence is SVHSNHSSPSSTASP. The UBA domain occupies 1029–1072; that stretch reads GLATRHYKIDQLARLGVAGRPQCEQALQQTNWSLEVAAELLLNA.

Belongs to the protein kinase superfamily. Tyr protein kinase family. Interacts with yki and ex. Interacts with drk. Likely to be a member of an axonal guidance receptor complex that includes SH3PX1, dock and Dscam. Interacts (via N-terminus) with dock. Interacts with SH3PX1 (via SH3 domain). Mg(2+) serves as cofactor. Post-translationally, phosphorylated. Autophosphorylated. As to expression, detected in ovaries (at protein level). In adults, relatively higher expression in the head compared to the body.

Its subcellular location is the cytoplasm. The protein resides in the cytoplasmic vesicle. The protein localises to the clathrin-coated vesicle. The catalysed reaction is L-tyrosyl-[protein] + ATP = O-phospho-L-tyrosyl-[protein] + ADP + H(+). It carries out the reaction L-threonyl-[protein] + ATP = O-phospho-L-threonyl-[protein] + ADP + H(+). Non-receptor tyrosine-protein and serine/threonine-protein kinase that is implicated in diverse biological functions such as cell survival, cell differentiation, cell growth and proliferation. Phosphorylates SH3PX1 and ex. Phosphorylates SH3PX1 predominantly on 'Tyr-56', which likely promotes the recruitment of SH3PX1 to an axonal guidance receptor complex that includes dock and Dscam; because phosphorylation of SH3PX1 increases its interaction with the complex member dock while decreasing its interaction with the actin cytoskeleton modulator WASp. In the wing and eye, promotes tissue growth, and during embryogenesis coordinates cell shape changes required for correct dorsal closure. Functions in the negative regulation of the Hippo/SWH (Sav/Wts/Hpo) signaling pathway by enhancing yki activity thereby promoting cell proliferation and inhibiting apoptosis. This is accomplished, at least in part, by phosphorylating ex thereby reducing its ability to efficiently activate the Hippo signaling cascade. In the eye disk, wing disk and possibly spermatids, inhibits programmed cell death induced by hid and rpr through a mechanism that is independent of the MAP kinase signal transduction pathway. Essential for male and female fertility. During oogenesis required for the correct temporal assembly, and consequently the catalytic activity of long Ctps filaments (cytoophidium) in the germline nurse cells, likely by phosphorylating an unidentified substrate that is essential for linking individual Ctps filaments into large, catalytically active assemblies. The polypeptide is Activated Cdc42 kinase Ack (Drosophila melanogaster (Fruit fly)).